Reading from the N-terminus, the 297-residue chain is 3-methyl-2-oxobutanoate hydroxymethyltransferase (297 aa).

Polar residues predominate over residues M1–N12. The disordered stretch occupies residues M1–K36. Positions A22–P33 are enriched in low complexity. Mg(2+) contacts are provided by D78 and D117. 3-methyl-2-oxobutanoate contacts are provided by residues D78 to S79, D117, and K147. Residue E149 participates in Mg(2+) binding. Catalysis depends on E215, which acts as the Proton acceptor.

The protein belongs to the PanB family. In terms of assembly, homodecamer; pentamer of dimers. It depends on Mg(2+) as a cofactor.

Its subcellular location is the cytoplasm. The catalysed reaction is 3-methyl-2-oxobutanoate + (6R)-5,10-methylene-5,6,7,8-tetrahydrofolate + H2O = 2-dehydropantoate + (6S)-5,6,7,8-tetrahydrofolate. It participates in cofactor biosynthesis; (R)-pantothenate biosynthesis; (R)-pantoate from 3-methyl-2-oxobutanoate: step 1/2. Catalyzes the reversible reaction in which hydroxymethyl group from 5,10-methylenetetrahydrofolate is transferred onto alpha-ketoisovalerate to form ketopantoate. This Mycobacterium ulcerans (strain Agy99) protein is 3-methyl-2-oxobutanoate hydroxymethyltransferase.